The following is a 376-amino-acid chain: N-acetyldiaminopimelate deacetylase (376 aa).

The active site involves aspartate 69. Glutamate 128 (proton acceptor) is an active-site residue.

It belongs to the peptidase M20A family. N-acetyldiaminopimelate deacetylase subfamily.

It catalyses the reaction N-acetyl-(2S,6S)-2,6-diaminopimelate + H2O = (2S,6S)-2,6-diaminopimelate + acetate. Its pathway is amino-acid biosynthesis; L-lysine biosynthesis via DAP pathway; LL-2,6-diaminopimelate from (S)-tetrahydrodipicolinate (acetylase route): step 3/3. Catalyzes the conversion of N-acetyl-diaminopimelate to diaminopimelate and acetate. This is N-acetyldiaminopimelate deacetylase from Streptococcus pneumoniae (strain Hungary19A-6).